The following is a 437-amino-acid chain: tRNA-2-methylthio-N(6)-dimethylallyladenosine synthase (437 aa).

Residues 1–115 (MKVYIETMGC…ISQVIHKEKA (115 aa)) form the MTTase N-terminal domain. Residues Cys10, Cys46, Cys78, Cys148, Cys152, and Cys155 each contribute to the [4Fe-4S] cluster site. Residues 134–367 (KKAQIRSLLN…QNRHKEILEE (234 aa)) enclose the Radical SAM core domain. The region spanning 370 to 436 (KLEVGKTHVV…KGRLMATTKG (67 aa)) is the TRAM domain.

This sequence belongs to the methylthiotransferase family. MiaB subfamily. As to quaternary structure, monomer. The cofactor is [4Fe-4S] cluster.

The protein resides in the cytoplasm. The catalysed reaction is N(6)-dimethylallyladenosine(37) in tRNA + (sulfur carrier)-SH + AH2 + 2 S-adenosyl-L-methionine = 2-methylsulfanyl-N(6)-dimethylallyladenosine(37) in tRNA + (sulfur carrier)-H + 5'-deoxyadenosine + L-methionine + A + S-adenosyl-L-homocysteine + 2 H(+). Functionally, catalyzes the methylthiolation of N6-(dimethylallyl)adenosine (i(6)A), leading to the formation of 2-methylthio-N6-(dimethylallyl)adenosine (ms(2)i(6)A) at position 37 in tRNAs that read codons beginning with uridine. In Helicobacter pylori (strain J99 / ATCC 700824) (Campylobacter pylori J99), this protein is tRNA-2-methylthio-N(6)-dimethylallyladenosine synthase.